The primary structure comprises 299 residues: 33 kDa chaperonin (299 aa).

2 disulfide bridges follow: Cys-240–Cys-242 and Cys-273–Cys-276.

This sequence belongs to the HSP33 family. Post-translationally, under oxidizing conditions two disulfide bonds are formed involving the reactive cysteines. Under reducing conditions zinc is bound to the reactive cysteines and the protein is inactive.

It localises to the cytoplasm. In terms of biological role, redox regulated molecular chaperone. Protects both thermally unfolding and oxidatively damaged proteins from irreversible aggregation. Plays an important role in the bacterial defense system toward oxidative stress. The protein is 33 kDa chaperonin of Gloeothece citriformis (strain PCC 7424) (Cyanothece sp. (strain PCC 7424)).